The chain runs to 429 residues: Probable proton-coupled zinc antiporter SLC30A4 (429 aa).

Residues 1 to 113 (MAGSGAWKRL…LLKQRKVKTR (113 aa)) are Cytoplasmic-facing. Residues 114–134 (LTIAAVLYLLFMIGELVGGYI) form a helical membrane-spanning segment. Topologically, residues 135 to 143 (ANSLAIMTD) are lumenal. Residues 144–164 (ALHMLTDLSAIILTLLALWLS) form a helical membrane-spanning segment. Histidine 146 and aspartate 150 together coordinate Zn(2+). At 165 to 178 (SKSPTKRFTFGFHR) the chain is on the cytoplasmic side. A helical membrane pass occupies residues 179–199 (LEVLSAMISVLLVYILMGFLL). The Lumenal segment spans residues 200 to 216 (YEAVQRTIHMKYEINGD). A helical transmembrane segment spans residues 217–237 (IMLITAAIGVAVNVIMGFLLN). At 238-274 (QSGHHHAHSHSLPSNSPTTGPRCGHNQGQDSLAVRAA) the chain is on the cytoplasmic side. The zinc binding stretch occupies residues 240–264 (GHHHAHSHSLPSNSPTTGPRCGHNQ). The chain crosses the membrane as a helical span at residues 275 to 295 (FVHALGDLVQSVGVLIAAYII). Zn(2+)-binding residues include histidine 277 and aspartate 281. Over 296 to 310 (RFKPEYRIADPICTY) the chain is Lumenal. A helical membrane pass occupies residues 311-331 (VFSLLVAFTTFRIIWDTVVII). Residues 332-429 (LEGVPSHLNV…TCANCQSSSS (98 aa)) lie on the Cytoplasmic side of the membrane.

This sequence belongs to the cation diffusion facilitator (CDF) transporter (TC 2.A.4) family. SLC30A subfamily. In terms of assembly, homodimerization could regulate efficiency for zinc transport. Interacts with TMEM163.

It is found in the endosome membrane. It localises to the late endosome membrane. Its subcellular location is the lysosome membrane. The enzyme catalyses Zn(2+)(in) + 2 H(+)(out) = Zn(2+)(out) + 2 H(+)(in). Its function is as follows. Probable proton-coupled zinc ion antiporter mediating zinc import from cytoplasm potentially into the endocytic compartment. Controls zinc deposition in milk. This Bos taurus (Bovine) protein is Probable proton-coupled zinc antiporter SLC30A4.